The chain runs to 345 residues: Methylthioribose-1-phosphate isomerase (345 aa).

Residues 47–49 (RGA), R90, and Q199 contribute to the substrate site. D240 serves as the catalytic Proton donor. Substrate is bound at residue 250-251 (NK).

It belongs to the eIF-2B alpha/beta/delta subunits family. MtnA subfamily.

It carries out the reaction 5-(methylsulfanyl)-alpha-D-ribose 1-phosphate = 5-(methylsulfanyl)-D-ribulose 1-phosphate. It functions in the pathway amino-acid biosynthesis; L-methionine biosynthesis via salvage pathway; L-methionine from S-methyl-5-thio-alpha-D-ribose 1-phosphate: step 1/6. Catalyzes the interconversion of methylthioribose-1-phosphate (MTR-1-P) into methylthioribulose-1-phosphate (MTRu-1-P). This is Methylthioribose-1-phosphate isomerase from Crocosphaera subtropica (strain ATCC 51142 / BH68) (Cyanothece sp. (strain ATCC 51142)).